A 341-amino-acid chain; its full sequence is Putative MAGE domain-containing protein MAGEA13P (341 aa).

Disordered regions lie at residues 1–21 (MPHSQKSRHCELEQGLQAPKE) and 78–101 (KATPWNQSDESSRSQEKKDPGASQ). Residues 87–97 (ESSRSQEKKDP) show a composition bias toward basic and acidic residues. Residues 105–304 (LEKKVDELVK…SSFPLLYEEA (200 aa)) form the MAGE domain.

The protein is Putative MAGE domain-containing protein MAGEA13P (MAGEA13P) of Homo sapiens (Human).